A 425-amino-acid chain; its full sequence is Meiotic recombination protein spo-11 (425 aa).

The disordered stretch occupies residues 1–38 (MYEYSFNPNIDHEPGSVESQQSTIYSDSDDSDDSFLDD). Positions 15–158 (GSVESQQSTI…LNILSCGRGI (144 aa)) constitute a Topo IIA-type catalytic domain. Positions 27–38 (DSDDSDDSFLDD) are enriched in acidic residues. Tyr119 functions as the O-(5'-phospho-DNA)-tyrosine intermediate in the catalytic mechanism. The Mg(2+) site is built by Glu202 and Asp255.

This sequence belongs to the TOP6A family. Mg(2+) is required as a cofactor.

The protein localises to the nucleus. The catalysed reaction is ATP-dependent breakage, passage and rejoining of double-stranded DNA.. Functionally, required for meiotic recombination. Mediates DNA cleavage that forms the double-strand breaks (DSB) that initiate meiotic recombination. The sequence is that of Meiotic recombination protein spo-11 (spo-11) from Caenorhabditis elegans.